We begin with the raw amino-acid sequence, 918 residues long: Signal transduction histidine-protein kinase BarA (918 aa).

Residues 1 to 9 (MTNYSLRAR) lie on the Cytoplasmic side of the membrane. A helical transmembrane segment spans residues 10–31 (MMILILAPTVLIGLLLSIFFVV). Residues 32-176 (HRYNDLQRQL…KSVRLQQYKE (145 aa)) are Periplasmic-facing. A helical transmembrane segment spans residues 177–196 (IFISSVMMLFCIGIALIFGW). Residues 197–918 (RLMRDVTGPI…VAREASKILG (722 aa)) are Cytoplasmic-facing. Residues 200-252 (RDVTGPIRNMVNTVDRIRRGQLDSRVEGFMLGELDMLKNGINSMAMSLAAYHE) form the HAMP domain. Residues 299-520 (NMSHELRTPL…TFWFHINLDL (222 aa)) enclose the Histidine kinase domain. The residue at position 302 (H302) is a Phosphohistidine; by autocatalysis. The Response regulatory domain maps to 669–785 (TVMAVDDNPA…RLHNLLLRYK (117 aa)). D718 is subject to 4-aspartylphosphate. The 97-residue stretch at 822–918 (KTDLARDMLQ…VAREASKILG (97 aa)) folds into the HPt domain. At H861 the chain carries Phosphohistidine.

Activation requires a sequential transfer of a phosphate group from a His in the primary transmitter domain, to an Asp in the receiver domain and to a His in the secondary transmitter domain.

The protein localises to the cell inner membrane. The catalysed reaction is ATP + protein L-histidine = ADP + protein N-phospho-L-histidine.. Functionally, member of the two-component regulatory system UvrY/BarA involved in the regulation of carbon metabolism via the CsrA/CsrB regulatory system. Phosphorylates UvrY, probably via a four-step phosphorelay. The protein is Signal transduction histidine-protein kinase BarA (barA) of Escherichia coli O157:H7.